Reading from the N-terminus, the 511-residue chain is Glutamate/gamma-aminobutyrate antiporter (511 aa).

Residues 1 to 13 lie on the Cytoplasmic side of the membrane; that stretch reads MATSVQTGKAKQL. A helical membrane pass occupies residues 14–36; it reads TLLGFFAITASMVMAVYEYPTFA. Over 37-40 the chain is Periplasmic; sequence TSGF. A helical transmembrane segment spans residues 41 to 64; it reads SLVFFLLLGGILWFIPVGLCAAEM. The Cytoplasmic portion of the chain corresponds to 65-85; that stretch reads ATVDGWEEGGVFAWVSNTLGP. The chain crosses the membrane as a helical span at residues 86–112; the sequence is RWGFAAISFGYLQIAIGFIPMLYFVLG. Residues 113 to 126 are Periplasmic-facing; the sequence is ALSYILKWPALNED. The helical transmembrane segment at 127 to 147 threads the bilayer; that stretch reads PITKTIAALIILWALALTQFG. At 148-151 the chain is on the cytoplasmic side; that stretch reads GTKY. The helical transmembrane segment at 152–180 threads the bilayer; it reads TARIAKVGFFAGILLPAFILIALAAIYLH. The Periplasmic portion of the chain corresponds to 181–201; sequence SGAPVAIEMDSKTFFPDFSKV. The helical transmembrane segment at 202–225 threads the bilayer; the sequence is GTLVVFVAFILSYMGVEASATHVN. Residues 226–229 are Cytoplasmic-facing; sequence EMSN. The chain crosses the membrane as a helical span at residues 230–259; it reads PGRDYPLAMLLLMVAAICLSSVGGLSIAMV. Residues 260–288 lie on the Periplasmic side of the membrane; the sequence is IPGNEINLSAGVMQTFTVLMSHVAPEIEW. Residues 289–322 form a helical membrane-spanning segment; the sequence is TVRVISALLLLGVLAEIASWIVGPSRGMYVTAQK. Topologically, residues 323–337 are cytoplasmic; that stretch reads NLLPAAFAKMNKNGV. Residues 338–359 form a helical membrane-spanning segment; sequence PVTLVISQLVITSIALIILTNT. Over 360–362 the chain is Periplasmic; that stretch reads GGG. A helical transmembrane segment spans residues 363-396; the sequence is NNMSFLIALALTVVIYLCAYFMLFIGYIVLVLKH. Topologically, residues 397–409 are cytoplasmic; that stretch reads PDLKRTFNIPGGK. Residues 410–430 traverse the membrane as a helical segment; that stretch reads GVKLVVAIVGLLTSIMAFIVS. Residues 431 to 443 are Periplasmic-facing; sequence FLPPDNIQGDSTD. Residues 444–467 form a helical membrane-spanning segment; sequence MYVELLVVSFLVVLALPFILYAVH. The Cytoplasmic portion of the chain corresponds to 468–511; it reads DRKGKANTGVTLEPINSQNAPKGHFFLHPRARSPHYIVMNDKKH.

The protein belongs to the amino acid-polyamine-organocation (APC) superfamily. Glutamate:GABA antiporter (GGA) (TC 2.A.3.7) family. As to quaternary structure, monomer.

It is found in the cell inner membrane. It catalyses the reaction 4-aminobutanoate(in) + L-glutamate(out) = 4-aminobutanoate(out) + L-glutamate(in). Its activity is regulated as follows. Shows pH-dependent activity. The Glu/GABA transport activity is robust at pH 4.5 and rapidly decreases with increasing pH, with no detectable activity at pH 6.5 or above. The Glu analog L-trans-pyrrolidine-2,4-dicarboxylic acid (L-PDC) blocks the uptake of glutamate by selective inhibition. Involved in glutaminase-dependent acid resistance. Exchanges extracellular glutamate (Glu) for intracellular gamma-aminobutyric acid (GABA) under acidic conditions. The protonation states of substrates are crucial for transport. Selectively transports Glu with no net charge and GABA with a positive charge. Also efficiently transports glutamine and, to a smaller extent, methionine and leucine. When the extracellular pH drops below 2.5, can import L-glutamine and export either glutamate or GABA. The ability to survive the extremely acidic conditions of the stomach is essential for successful colonization of the host by commensal and pathogenic bacteria. This Escherichia coli (strain K12) protein is Glutamate/gamma-aminobutyrate antiporter.